A 339-amino-acid polypeptide reads, in one-letter code: U11/U12 small nuclear ribonucleoprotein 48 kDa protein (339 aa).

The CHHC U11-48K-type zinc-finger motif lies at 55–82; the sequence is VVICPYDSNHHMPKSSLAKHMASCRLRK. Positions 58, 64, 74, and 78 each coordinate Zn(2+). Glycyl lysine isopeptide (Lys-Gly) (interchain with G-Cter in SUMO2) cross-links involve residues Lys87 and Lys104. The segment at 255–339 is disordered; that stretch reads HWQEEQEKAE…HSHKRRKQKI (85 aa). Residues 294–309 show a composition bias toward basic residues; that stretch reads RHRRDRSRSPHKRKRN. The segment covering 310–328 has biased composition (basic and acidic residues); sequence KDKDKNCESRRRKERDGER. A compositionally biased stretch (basic residues) spans 329 to 339; it reads HHSHKRRKQKI.

Component of the U11/U12 snRNPs that are part of the U12-type spliceosome. Not found in the major spliceosome.

Its subcellular location is the nucleus. Functionally, likely involved in U12-type 5' splice site recognition. In Homo sapiens (Human), this protein is U11/U12 small nuclear ribonucleoprotein 48 kDa protein (SNRNP48).